A 131-amino-acid polypeptide reads, in one-letter code: MSRRLGAAAAVLLLWLAVLTFALHGYYGGRLGSARRRNILLQHPALALHLPTRKMLLAVASFDDASSPSSLTTTDRHHHHHRHHGHHHHRGHDRWNRKGVPPTAAGPGEEVDPRFGVQKRLVPTGPNPLHH.

The segment at 67 to 131 (SPSSLTTTDR…VPTGPNPLHH (65 aa)) is disordered. A compositionally biased stretch (basic residues) spans 76–97 (RHHHHHRHHGHHHHRGHDRWNR).

Belongs to the CLV3/ESR signal peptide family. In terms of tissue distribution, expressed in all aerial apical meristems, including the floral and inflorescence meristems in the reproductive phase and the shoot apical meristem in the vegetative phase. Also detected in the primordia of lateral organs such as the leaf and the floral organs.

Non functional suppressor of the fon2 mutation. In Oryza sativa subsp. japonica, the protein has a single amino acid substitution at the putative processing site of the signal peptide while in all the other varieties/species of domesticated and wild rice tested the protein is functional. The sequence is that of Inactive protein FON2 SPARE1 (FOS1) from Oryza sativa subsp. japonica (Rice).